The sequence spans 86 residues: Protein YwqI (86 aa).

Residues 57–83 (DYKKAVQKNIEDTKDNVDSLKEQDEAI) are a coiled coil.

This is Protein YwqI (ywqI) from Bacillus subtilis (strain 168).